Consider the following 111-residue polypeptide: UPF0060 membrane protein Krad_3114 (111 aa).

4 helical membrane passes run 7–27, 33–53, 62–82, and 88–108; these read IALF…VWQG, GLAW…AATL, VLAA…AVVD, and RFDV…MYAP.

It belongs to the UPF0060 family.

Its subcellular location is the cell membrane. The polypeptide is UPF0060 membrane protein Krad_3114 (Kineococcus radiotolerans (strain ATCC BAA-149 / DSM 14245 / SRS30216)).